Here is a 107-residue protein sequence, read N- to C-terminus: Large ribosomal subunit protein eL33 (107 aa).

This sequence belongs to the eukaryotic ribosomal protein eL33 family. Component of the large ribosomal subunit. Mature ribosomes consist of a small (40S) and a large (60S) subunit. The 40S subunit contains about 32 different proteins and 1 molecule of RNA (18S). The 60S subunit contains 45 different proteins and 3 molecules of RNA (25S, 5.8S and 5S).

Its subcellular location is the cytoplasm. In terms of biological role, component of the ribosome, a large ribonucleoprotein complex responsible for the synthesis of proteins in the cell. The small ribosomal subunit (SSU) binds messenger RNAs (mRNAs) and translates the encoded message by selecting cognate aminoacyl-transfer RNA (tRNA) molecules. The large subunit (LSU) contains the ribosomal catalytic site termed the peptidyl transferase center (PTC), which catalyzes the formation of peptide bonds, thereby polymerizing the amino acids delivered by tRNAs into a polypeptide chain. The nascent polypeptides leave the ribosome through a tunnel in the LSU and interact with protein factors that function in enzymatic processing, targeting, and the membrane insertion of nascent chains at the exit of the ribosomal tunnel. The sequence is that of Large ribosomal subunit protein eL33 from Candida albicans (strain SC5314 / ATCC MYA-2876) (Yeast).